Reading from the N-terminus, the 2073-residue chain is Dedicator of cytokinesis protein 11 (2073 aa).

Phosphoserine is present on S12. T16 is modified (phosphothreonine). Phosphoserine is present on residues S23 and S161. The PH domain occupies 165–272 (GVIKQGWLHK…WLIMLKKIIQ (108 aa)). A Phosphotyrosine modification is found at Y248. Phosphoserine occurs at positions 306 and 445. Residues 640–818 (KNHLYVYPLQ…PLLKIKTHLE (179 aa)) form the C2 DOCK-type domain. The tract at residues 1227 to 1267 (QNGHGIKREDSRGSLIPEGATGFPDPGSTSENTRQSSSRSS) is disordered. Phosphoserine occurs at positions 1237 and 1240. Positions 1254 to 1267 (STSENTRQSSSRSS) are enriched in low complexity. Residues 1609-2036 (KSYASTPELR…LSDIIHEQIL (428 aa)) form the DOCKER domain.

It belongs to the DOCK family. As to quaternary structure, interacts with CDC42. Expressed in spleen, thymus, mesenteric lymph nodes (MLN), bone marrow and peripheral blood lymphocytes. Enriched in B-cells from germinal centers. Expressed in B-, T- and dendritic cells as well as Purkinje cells.

Its function is as follows. Guanine nucleotide-exchange factor (GEF) that activates CDC42 by exchanging bound GDP for free GTP. Required for marginal zone (MZ) B-cell development, is associated with early bone marrow B-cell development, MZ B-cell formation, MZ B-cell number and marginal metallophilic macrophages morphology. Facilitates filopodia formation through the activation of CDC42. The sequence is that of Dedicator of cytokinesis protein 11 from Mus musculus (Mouse).